Here is a 110-residue protein sequence, read N- to C-terminus: Iron-sulfur cluster assembly protein CyaY (110 aa).

Belongs to the frataxin family.

Its function is as follows. Involved in iron-sulfur (Fe-S) cluster assembly. May act as a regulator of Fe-S biogenesis. The protein is Iron-sulfur cluster assembly protein CyaY of Pseudomonas syringae pv. tomato (strain ATCC BAA-871 / DC3000).